Here is a 1009-residue protein sequence, read N- to C-terminus: Chitin synthase 2 (1009 aa).

Composition is skewed to polar residues over residues 1 to 12 and 34 to 62; these read MSYNNPNNSNSH and EFLN…LNFQ. 2 disordered regions span residues 1–62 and 175–234; these read MSYN…LNFQ and DESQ…EVRS. Acidic residues predominate over residues 192 to 202; that stretch reads EGEEEEEEGET. 7 helical membrane passes run 647–667, 682–702, 722–742, 757–777, 804–823, 930–950, and 967–987; these read WLNG…KVWT, FFYQ…YFLV, ILSV…FVLS, IVIF…FMAV, LVVA…FLYF, VLVW…TGGF, and AAVF…FRFI.

Belongs to the chitin synthase family.

The protein resides in the cell membrane. The enzyme catalyses [(1-&gt;4)-N-acetyl-beta-D-glucosaminyl](n) + UDP-N-acetyl-alpha-D-glucosamine = [(1-&gt;4)-N-acetyl-beta-D-glucosaminyl](n+1) + UDP + H(+). In terms of biological role, polymerizes chitin, a structural polymer of the cell wall and septum, by transferring the sugar moiety of UDP-GlcNAc to the non-reducing end of the growing chitin polymer. The chain is Chitin synthase 2 (CHS2) from Candida albicans (Yeast).